The primary structure comprises 276 residues: NADPH-dependent 7-cyano-7-deazaguanine reductase (276 aa).

Isoleucine 83–serine 85 serves as a coordination point for substrate. Residue serine 85–lysine 86 coordinates NADPH. Cysteine 184 serves as the catalytic Thioimide intermediate. Catalysis depends on aspartate 191, which acts as the Proton donor. Histidine 223–glutamate 224 is a substrate binding site. Arginine 252–glycine 253 is a binding site for NADPH.

Belongs to the GTP cyclohydrolase I family. QueF type 2 subfamily. As to quaternary structure, homodimer.

The protein localises to the cytoplasm. It catalyses the reaction 7-aminomethyl-7-carbaguanine + 2 NADP(+) = 7-cyano-7-deazaguanine + 2 NADPH + 3 H(+). It functions in the pathway tRNA modification; tRNA-queuosine biosynthesis. Its function is as follows. Catalyzes the NADPH-dependent reduction of 7-cyano-7-deazaguanine (preQ0) to 7-aminomethyl-7-deazaguanine (preQ1). The sequence is that of NADPH-dependent 7-cyano-7-deazaguanine reductase from Pseudomonas putida (strain ATCC 47054 / DSM 6125 / CFBP 8728 / NCIMB 11950 / KT2440).